The primary structure comprises 261 residues: Ubiquinone biosynthesis O-methyltransferase (261 aa).

The interval Met1–Thr22 is disordered. Low complexity predominate over residues Ser8 to Ala18. Positions 55, 86, 107, and 149 each coordinate S-adenosyl-L-methionine.

It belongs to the methyltransferase superfamily. UbiG/COQ3 family.

The catalysed reaction is a 3-demethylubiquinol + S-adenosyl-L-methionine = a ubiquinol + S-adenosyl-L-homocysteine + H(+). It carries out the reaction a 3-(all-trans-polyprenyl)benzene-1,2-diol + S-adenosyl-L-methionine = a 2-methoxy-6-(all-trans-polyprenyl)phenol + S-adenosyl-L-homocysteine + H(+). It participates in cofactor biosynthesis; ubiquinone biosynthesis. O-methyltransferase that catalyzes the 2 O-methylation steps in the ubiquinone biosynthetic pathway. The protein is Ubiquinone biosynthesis O-methyltransferase of Nitrobacter winogradskyi (strain ATCC 25391 / DSM 10237 / CIP 104748 / NCIMB 11846 / Nb-255).